Consider the following 347-residue polypeptide: Peroxidase C2 (347 aa).

The first 24 residues, 1–24 (MHSSSSLIKLGFLLLLLNVSLSHA), serve as a signal peptide directing secretion. Disulfide bonds link Cys35–Cys115, Cys68–Cys73, Cys121–Cys325, and Cys201–Cys233. His66 functions as the Proton acceptor in the catalytic mechanism. The Ca(2+) site is built by Asp67, Val70, Gly72, Asp74, and Ser76. Asn81 is a glycosylation site (N-linked (GlcNAc...) asparagine). Pro163 provides a ligand contact to substrate. Residue His194 participates in heme b binding. Thr195 is a binding site for Ca(2+). 2 N-linked (GlcNAc...) asparagine glycosylation sites follow: Asn210 and Asn238. Ca(2+)-binding residues include Asp246, Thr249, and Asp254.

This sequence belongs to the peroxidase family. Classical plant (class III) peroxidase subfamily. It depends on Ca(2+) as a cofactor. Requires heme b as cofactor.

It is found in the secreted. Its subcellular location is the vacuole. The enzyme catalyses 2 a phenolic donor + H2O2 = 2 a phenolic radical donor + 2 H2O. Functionally, removal of H(2)O(2), oxidation of toxic reductants, biosynthesis and degradation of lignin, suberization, auxin catabolism, response to environmental stresses such as wounding, pathogen attack and oxidative stress. These functions might be dependent on each isozyme/isoform in each plant tissue. The protein is Peroxidase C2 (PRXC2) of Armoracia rusticana (Horseradish).